Here is a 348-residue protein sequence, read N- to C-terminus: Protein RecA (348 aa).

64-71 (GPESSGKT) is a binding site for ATP.

It belongs to the RecA family. As to quaternary structure, monomer; forms higher-order oligomers. Interacts with RecU. Interacts with DprA (smf). Interacts with RecD2.

The protein resides in the cytoplasm. The protein localises to the nucleoid. Functionally, multifunctional protein involved in homologous recombination, DNA repair and competence. Can catalyze the hydrolysis of (d)ATP in the presence of single-stranded (ss)DNA; prefers dATP at least in vitro, catalyzes the dATP-dependent uptake of ssDNA by duplex DNA, and the dATP-dependent hybridization of homologous ssDNA (strand exchange). RecA-ATP cannot catalyze homologous DNA strand exchange; SsbA and DprA activate strand exchange by RecA-ATP. It interacts with LexA causing its activation and leading to its autocatalytic cleavage. Hydrolysis of ATP in the presence of ssDNA is partially inhibited by RecU. Required for DNA transformation; protects transforming DNA from degradation, possibly in combination with DprA. Blocks replication of both leading and lagging strand DNA in the presence of RecO and SsbA; RecD2 is able to overcome this blockage. Recruited to repair centers (RCs), foci that are the site of double-stranded DNA break(s), after RecN. Concomitant with the appearance of RecO at the RCs, RecA forms threads that extend from RCs toward the opposite cell half, possibly searching for sequence homology along the sister chromosome. The threads disappear after about 2 hours. Thread formation is absolutely dependent on RecJ or AadAB. Thread formation is also dependent on RarA. The sequence is that of Protein RecA from Bacillus subtilis (strain 168).